Reading from the N-terminus, the 184-residue chain is ATP synthase subunit b (184 aa).

A helical transmembrane segment spans residues 19–39; sequence IIVGVILVLLLTWLIAKAVVP.

The protein belongs to the ATPase B chain family. As to quaternary structure, F-type ATPases have 2 components, F(1) - the catalytic core - and F(0) - the membrane proton channel. F(1) has five subunits: alpha(3), beta(3), gamma(1), delta(1), epsilon(1). F(0) has three main subunits: a(1), b(2) and c(10-14). The alpha and beta chains form an alternating ring which encloses part of the gamma chain. F(1) is attached to F(0) by a central stalk formed by the gamma and epsilon chains, while a peripheral stalk is formed by the delta and b chains.

The protein resides in the cell membrane. F(1)F(0) ATP synthase produces ATP from ADP in the presence of a proton or sodium gradient. F-type ATPases consist of two structural domains, F(1) containing the extramembraneous catalytic core and F(0) containing the membrane proton channel, linked together by a central stalk and a peripheral stalk. During catalysis, ATP synthesis in the catalytic domain of F(1) is coupled via a rotary mechanism of the central stalk subunits to proton translocation. In terms of biological role, component of the F(0) channel, it forms part of the peripheral stalk, linking F(1) to F(0). This Cutibacterium acnes (strain DSM 16379 / KPA171202) (Propionibacterium acnes) protein is ATP synthase subunit b.